The following is a 308-amino-acid chain: Beta-carotene hydroxylase 2, chloroplastic (308 aa).

The N-terminal 59 residues, 1–59 (MAAARISFSSTSRTSYYRHSPFLGPKPTPTTPSVYPITPFSPNLGSILRCRRRPSFTVC), are a transit peptide targeting the chloroplast. Transmembrane regions (helical) follow at residues 105-125 (YLVAAVMSSFGITSMAVMAVY) and 139-159 (FSEMFGTFALSVGAAVGMEFW). Positions 152-279 (AAVGMEFWAR…KFNGVPYGLF (128 aa)) constitute a Fatty acid hydroxylase domain. A Histidine box-1 motif is present at residues 164-169 (HKALWH). Positions 176 to 180 (HESHH) match the Histidine box-2 motif. 2 helical membrane-spanning segments follow: residues 191–211 (DVFAIINAVPAIALLDYGFFH) and 215–235 (IPGLCFGAGLGITVFGMAYMF). A Histidine box-3 motif is present at residues 237 to 242 (HDGLVH). The short motif at 263 to 267 (HSLHH) is the Histidine box-4 element.

This sequence belongs to the sterol desaturase family.

It is found in the plastid. The protein localises to the chloroplast membrane. The enzyme catalyses all-trans-beta-carotene + 4 reduced [2Fe-2S]-[ferredoxin] + 2 O2 + 4 H(+) = all-trans-zeaxanthin + 4 oxidized [2Fe-2S]-[ferredoxin] + 2 H2O. It catalyses the reaction all-trans-beta-carotene + 2 reduced [2Fe-2S]-[ferredoxin] + O2 + 2 H(+) = beta-cryptoxanthin + 2 oxidized [2Fe-2S]-[ferredoxin] + H2O. The catalysed reaction is beta-cryptoxanthin + 2 reduced [2Fe-2S]-[ferredoxin] + O2 + 2 H(+) = all-trans-zeaxanthin + 2 oxidized [2Fe-2S]-[ferredoxin] + H2O. Inhibited by o-phenanthroline and 8-hydroxyquinoline. Nonheme diiron monooxygenase involved in the biosynthesis of xanthophylls. Specific for beta-ring hydroxylations of beta-carotene. Produces beta-cryptoxanthin and zeaxanthin. Uses ferredoxin as an electron donor. The protein is Beta-carotene hydroxylase 2, chloroplastic of Capsicum annuum (Capsicum pepper).